A 385-amino-acid polypeptide reads, in one-letter code: 8-amino-7-oxononanoate synthase (385 aa).

Position 23 (arginine 23) interacts with substrate. Position 110-111 (110-111) interacts with pyridoxal 5'-phosphate; the sequence is GF. Residue histidine 135 coordinates substrate. Residues serine 180, histidine 208, and threonine 234 each coordinate pyridoxal 5'-phosphate. Lysine 237 is subject to N6-(pyridoxal phosphate)lysine. Substrate is bound at residue threonine 350.

The protein belongs to the class-II pyridoxal-phosphate-dependent aminotransferase family. BioF subfamily. In terms of assembly, homodimer. Pyridoxal 5'-phosphate serves as cofactor.

The enzyme catalyses 6-carboxyhexanoyl-[ACP] + L-alanine + H(+) = (8S)-8-amino-7-oxononanoate + holo-[ACP] + CO2. It functions in the pathway cofactor biosynthesis; biotin biosynthesis. Its function is as follows. Catalyzes the decarboxylative condensation of pimeloyl-[acyl-carrier protein] and L-alanine to produce 8-amino-7-oxononanoate (AON), [acyl-carrier protein], and carbon dioxide. This is 8-amino-7-oxononanoate synthase from Vibrio vulnificus (strain CMCP6).